Here is a 337-residue protein sequence, read N- to C-terminus: tRNA pseudouridine synthase D (337 aa).

D77 functions as the Nucleophile in the catalytic mechanism. Residues 152–308 enclose the TRUD domain; the sequence is GFPNYFTEQR…ARDFHWEFVE (157 aa).

Belongs to the pseudouridine synthase TruD family.

It catalyses the reaction uridine(13) in tRNA = pseudouridine(13) in tRNA. Functionally, responsible for synthesis of pseudouridine from uracil-13 in transfer RNAs. The polypeptide is tRNA pseudouridine synthase D (Mannheimia succiniciproducens (strain KCTC 0769BP / MBEL55E)).